A 62-amino-acid polypeptide reads, in one-letter code: Alpha-conotoxin ViIA (62 aa).

The N-terminal stretch at 1–18 (MGMRMMFVVFLLVVFASS) is a signal peptide. The propeptide occupies 19–45 (VTLDRASYGRYASPVDRASALIAQAIL). Disulfide bonds link cysteine 48–cysteine 54 and cysteine 49–cysteine 61.

The protein belongs to the conotoxin A superfamily. Post-translationally, the toxin is inactive on the alpha-3-beta-2 nAChR when the disulfide bond connectivity is C1-C4 and C2-C3 (ViIA-I) (IC(50)&gt;10000 nM). In terms of tissue distribution, expressed by the venom duct.

Its subcellular location is the secreted. Its function is as follows. Alpha-conotoxins act on postsynaptic membranes, they bind to the nicotinic acetylcholine receptors (nAChR) and thus inhibit them. This toxin selectively inhibits nicotinic acetylcholine receptor (nAChR) alpha-3-beta-2 subtype (IC(50)=845.5 nM). This Conus virgo (Virgin cone) protein is Alpha-conotoxin ViIA.